The sequence spans 30 residues: Dermaseptin-3.4TR (30 aa).

In terms of tissue distribution, expressed by the skin glands.

It is found in the secreted. Its function is as follows. Has antimicrobial activity. The polypeptide is Dermaseptin-3.4TR (Phyllomedusa trinitatis (Trinidad leaf frog)).